A 288-amino-acid chain; its full sequence is Acetyl-coenzyme A carboxylase carboxyl transferase subunit beta (288 aa).

Residues 32 to 288 (LFAKCPACKH…LELHTEVENV (257 aa)) form the CoA carboxyltransferase N-terminal domain. Zn(2+) contacts are provided by cysteine 36, cysteine 39, cysteine 54, and cysteine 57. The segment at 36-57 (CPACKHTIYQKDLGKNKVCPNC) adopts a C4-type zinc-finger fold.

The protein belongs to the AccD/PCCB family. As to quaternary structure, acetyl-CoA carboxylase is a heterohexamer composed of biotin carboxyl carrier protein (AccB), biotin carboxylase (AccC) and two subunits each of ACCase subunit alpha (AccA) and ACCase subunit beta (AccD). Requires Zn(2+) as cofactor.

It localises to the cytoplasm. The enzyme catalyses N(6)-carboxybiotinyl-L-lysyl-[protein] + acetyl-CoA = N(6)-biotinyl-L-lysyl-[protein] + malonyl-CoA. It participates in lipid metabolism; malonyl-CoA biosynthesis; malonyl-CoA from acetyl-CoA: step 1/1. In terms of biological role, component of the acetyl coenzyme A carboxylase (ACC) complex. Biotin carboxylase (BC) catalyzes the carboxylation of biotin on its carrier protein (BCCP) and then the CO(2) group is transferred by the transcarboxylase to acetyl-CoA to form malonyl-CoA. The protein is Acetyl-coenzyme A carboxylase carboxyl transferase subunit beta of Lactococcus lactis subsp. cremoris (strain SK11).